A 764-amino-acid chain; its full sequence is Ergosteryl-beta-glucosidase (764 aa).

Glu-515 serves as the catalytic Nucleophile. A disordered region spans residues 588-629 (HDTRAKTPTPEPSPASTVASVSTSTSKSGSSQPPSFIKPDNH). Thr-594 is subject to Phosphothreonine. The span at 601–622 (PASTVASVSTSTSKSGSSQPPS) shows a compositional bias: low complexity.

It belongs to the glycosyl hydrolase 5 (cellulase A) family.

It is found in the cytoplasm. The protein resides in the cytosol. Its subcellular location is the vacuole membrane. It carries out the reaction ergosteryl 3-beta-D-glucoside + H2O = ergosterol + D-glucose. Its function is as follows. Ergosteryl beta-glucosidase involved in the ergosteryl beta-glucoside (EG) catabolic pathway and vacuole formation via hydrolysis of EG to generate glucose. Is also able to hydrolyze cholesteryl beta-glucoside and sitosteryl beta-glucoside to generate glucose; and C6-7-nitro-2,1,3-benzoxadiazole (NBD)-GlcCer to generate C6-NBD-ceramide (Cer). This is Ergosteryl-beta-glucosidase from Saccharomyces cerevisiae (strain ATCC 204508 / S288c) (Baker's yeast).